The following is a 591-amino-acid chain: MIVLPNKVRIFINDRMKKDIYLGISNFGFENDIDEILGIAHLLEHLLISFDSTNFLANASTSRSYMSFWCKSINSATESDAIRTLVSWFFSNGKLKDNFSLSSIRFHIKELENEYYFRNEVFHCMDILTFLSGGDLYNGGRIDMIDNLNIVRDMLVNRMQRISGSNIVIFVKRLGPGTLDFFKQTFGSLPACPEIIPSSIPVSTNGKIVMTPSPFYTVMVKINPTLDNILGILYLYETYHLIDYETIGNQLYLTVSFIDETEYESFLRGEAILQISQCQSINMNYSDDYMMNIYLNFPWLSHDLYDYITRINDDSKSILISLTNEIYASIINRDIIVIYPNFSKAMCNTRDTQQHPIVVLDATNDGLIKKPYRSIPLMKRLTSNEIFIRYGDASLMDMITLSLSKQDISLKRNAEGIRVKHSFSADDIQAIMESDSFLKYSRSKPAAMYQYIFLSFFASGNSIDDILANRDSTLEFSKRTKSKILFGRNTRYDVTAKSSFVCGIVRGKSLDKTSLVEMMWDLKKKGLIYSMEFTNLLSKNTFYLFTFTIYTDEVYDYLNTNKLFSAKCLVVSTKGDVENFSSLKKDVVIRV.

Position 41 (His41) interacts with Zn(2+). Residue Glu44 is part of the active site. Zn(2+)-binding residues include His45 and Glu112.

This sequence belongs to the peptidase M44 family. Zn(2+) is required as a cofactor. In terms of processing, undergoes proteolytic processing during the course of infection. May be cleaved into 46 kDa and 22 kDa products (Potential).

Its subcellular location is the virion. In terms of biological role, probably involved in maturation of some viral proteins by processing them preferentially at Ala-Gly-|-Ser/Thr/Lys motifs. Does not seem to be responsible for the cleavage of major core proteins. This chain is Metalloendopeptidase OPG085 (OPG085), found in Homo sapiens (Human).